Consider the following 254-residue polypeptide: MINLGSYNLLRHEKDSFLEIIRRIKDGDNLLRNKFIDDFKPFILKCVSQLVGKKNDLTQSDEYSIALIAFNEAIESYDLDKKTKFVSFSKQVIKRRLIDYLRSTKKNNVAVPFSYFNDCNSSFNDSSTGNFEEKFLYDRNSDYSIDFEAREEIKNLELKICEYKMTIEDLIECSPKHRDTIILCLNVANIIIEDESLYQMFNKRKTLPYKELTERFNLCRRTLEKNRKFITAMVLILKSDLEVLKKYIYDTLGR.

The short motif at 61–74 is the Polymerase core binding element; the sequence is DEYSIALIAFNEAI. Positions 209 to 228 form a DNA-binding region, H-T-H motif; that stretch reads YKELTERFNLCRRTLEKNRK.

It belongs to the sigma-70 factor family. SigI subfamily. As to quaternary structure, interacts with RsgI8.

The protein localises to the cytoplasm. Its activity is regulated as follows. Negatively regulated by the anti-sigma-I factor RsgI8. Functionally, sigma factors are initiation factors that promote the attachment of RNA polymerase to specific initiation sites and are then released. In Acetivibrio thermocellus (strain ATCC 27405 / DSM 1237 / JCM 9322 / NBRC 103400 / NCIMB 10682 / NRRL B-4536 / VPI 7372) (Clostridium thermocellum), this protein is RNA polymerase sigma factor SigI8.